A 142-amino-acid chain; its full sequence is Large ribosomal subunit protein uL11 (142 aa).

The protein belongs to the universal ribosomal protein uL11 family. As to quaternary structure, part of the ribosomal stalk of the 50S ribosomal subunit. Interacts with L10 and the large rRNA to form the base of the stalk. L10 forms an elongated spine to which L12 dimers bind in a sequential fashion forming a multimeric L10(L12)X complex. One or more lysine residues are methylated.

Forms part of the ribosomal stalk which helps the ribosome interact with GTP-bound translation factors. This chain is Large ribosomal subunit protein uL11, found in Hydrogenovibrio crunogenus (strain DSM 25203 / XCL-2) (Thiomicrospira crunogena).